A 163-amino-acid polypeptide reads, in one-letter code: Nucleotide-binding protein BA_1166 (163 aa).

This sequence belongs to the YajQ family.

Its function is as follows. Nucleotide-binding protein. The protein is Nucleotide-binding protein BA_1166 of Bacillus anthracis.